Here is a 347-residue protein sequence, read N- to C-terminus: L-threonine 3-dehydrogenase (347 aa).

Cysteine 43 provides a ligand contact to Zn(2+). Catalysis depends on charge relay system residues threonine 45 and histidine 48. Histidine 68, glutamate 69, cysteine 98, cysteine 101, cysteine 104, and cysteine 112 together coordinate Zn(2+). NAD(+)-binding positions include isoleucine 180, aspartate 200, arginine 205, leucine 267–leucine 269, and isoleucine 292–threonine 293.

The protein belongs to the zinc-containing alcohol dehydrogenase family. As to quaternary structure, homotetramer. Zn(2+) is required as a cofactor.

The protein resides in the cytoplasm. The catalysed reaction is L-threonine + NAD(+) = (2S)-2-amino-3-oxobutanoate + NADH + H(+). The protein operates within amino-acid degradation; L-threonine degradation via oxydo-reductase pathway; glycine from L-threonine: step 1/2. Catalyzes the NAD(+)-dependent oxidation of L-threonine to 2-amino-3-ketobutyrate. The polypeptide is L-threonine 3-dehydrogenase (Bacillus subtilis (strain 168)).